Consider the following 249-residue polypeptide: DNA repair protein RecO (249 aa).

It belongs to the RecO family.

Involved in DNA repair and RecF pathway recombination. The protein is DNA repair protein RecO of Lactobacillus delbrueckii subsp. bulgaricus (strain ATCC 11842 / DSM 20081 / BCRC 10696 / JCM 1002 / NBRC 13953 / NCIMB 11778 / NCTC 12712 / WDCM 00102 / Lb 14).